The primary structure comprises 513 residues: ATP synthase subunit alpha (513 aa).

171–178 (GDRQIGKT) is a binding site for ATP.

Belongs to the ATPase alpha/beta chains family. In terms of assembly, F-type ATPases have 2 components, CF(1) - the catalytic core - and CF(0) - the membrane proton channel. CF(1) has five subunits: alpha(3), beta(3), gamma(1), delta(1), epsilon(1). CF(0) has three main subunits: a(1), b(2) and c(9-12). The alpha and beta chains form an alternating ring which encloses part of the gamma chain. CF(1) is attached to CF(0) by a central stalk formed by the gamma and epsilon chains, while a peripheral stalk is formed by the delta and b chains.

Its subcellular location is the cell membrane. The enzyme catalyses ATP + H2O + 4 H(+)(in) = ADP + phosphate + 5 H(+)(out). Functionally, produces ATP from ADP in the presence of a proton gradient across the membrane. The alpha chain is a regulatory subunit. The sequence is that of ATP synthase subunit alpha from Wolbachia pipientis subsp. Culex pipiens (strain wPip).